The chain runs to 296 residues: Formamidopyrimidine-DNA glycosylase (296 aa).

Residue Pro-2 is the Schiff-base intermediate with DNA of the active site. Glu-3 (proton donor) is an active-site residue. The Proton donor; for beta-elimination activity role is filled by Lys-58. 3 residues coordinate DNA: His-104, Arg-126, and Lys-169. The FPG-type zinc finger occupies 260 to 296; sequence SVYDRESQACRTPGCGGTVARIVQAGRSTFYCATCQK. The active-site Proton donor; for delta-elimination activity is Arg-286.

The protein belongs to the FPG family. In terms of assembly, monomer. Zn(2+) is required as a cofactor.

It catalyses the reaction Hydrolysis of DNA containing ring-opened 7-methylguanine residues, releasing 2,6-diamino-4-hydroxy-5-(N-methyl)formamidopyrimidine.. The enzyme catalyses 2'-deoxyribonucleotide-(2'-deoxyribose 5'-phosphate)-2'-deoxyribonucleotide-DNA = a 3'-end 2'-deoxyribonucleotide-(2,3-dehydro-2,3-deoxyribose 5'-phosphate)-DNA + a 5'-end 5'-phospho-2'-deoxyribonucleoside-DNA + H(+). In terms of biological role, involved in base excision repair of DNA damaged by oxidation or by mutagenic agents. Acts as a DNA glycosylase that recognizes and removes damaged bases. Has a preference for oxidized purines, such as 7,8-dihydro-8-oxoguanine (8-oxoG). Has AP (apurinic/apyrimidinic) lyase activity and introduces nicks in the DNA strand. Cleaves the DNA backbone by beta-delta elimination to generate a single-strand break at the site of the removed base with both 3'- and 5'-phosphates. The polypeptide is Formamidopyrimidine-DNA glycosylase (Rhizobium johnstonii (strain DSM 114642 / LMG 32736 / 3841) (Rhizobium leguminosarum bv. viciae)).